Here is a 119-residue protein sequence, read N- to C-terminus: MVLTNSKQPRKQRKALYNAPLHLRNSVMAAMLSKELKEKFNKNSLPVKKGDTVKVLRGNFKGIEGEVSKVDYAGYKIIVEGVVNKKQDGTETAYPIHPSNVMITKLDESDEKRFKNSSN.

It belongs to the universal ribosomal protein uL24 family. Part of the 50S ribosomal subunit.

In terms of biological role, one of two assembly initiator proteins, it binds directly to the 5'-end of the 23S rRNA, where it nucleates assembly of the 50S subunit. Functionally, located at the polypeptide exit tunnel on the outside of the subunit. This Methanococcus maripaludis (strain C5 / ATCC BAA-1333) protein is Large ribosomal subunit protein uL24.